Reading from the N-terminus, the 492-residue chain is Octanoyltransferase (492 aa).

The tract at residues 1 to 255 is unknown; sequence MRCILLGSGT…GYDGLEAIID (255 aa). Residues 256-492 form a lipB domain region; sequence EKGIRIKDFE…AVFRRNFGAL (237 aa). Residues 305–492 form the BPL/LPL catalytic domain; it reads RKPQNTLLFC…AVFRRNFGAL (188 aa). Substrate-binding positions include 350-357, 423-425, and 436-438; these read RGGDITYH, AIG, and GFA. Catalysis depends on cysteine 454, which acts as the Acyl-thioester intermediate.

In the C-terminal section; belongs to the LipB family.

Its subcellular location is the cytoplasm. The enzyme catalyses octanoyl-[ACP] + L-lysyl-[protein] = N(6)-octanoyl-L-lysyl-[protein] + holo-[ACP] + H(+). It participates in protein modification; protein lipoylation via endogenous pathway; protein N(6)-(lipoyl)lysine from octanoyl-[acyl-carrier-protein]: step 1/2. Functionally, catalyzes the transfer of endogenously produced octanoic acid from octanoyl-acyl-carrier-protein onto the lipoyl domains of lipoate-dependent enzymes. Lipoyl-ACP can also act as a substrate although octanoyl-ACP is likely to be the physiological substrate. This chain is Octanoyltransferase, found in Porphyromonas gingivalis (strain ATCC BAA-308 / W83).